The primary structure comprises 416 residues: POC1 centriolar protein homolog A (416 aa).

WD repeat units lie at residues 16-55 (GHRD…RAYR), 58-97 (GHKD…ESVL), 100-139 (AHTG…IICT), 142-181 (EHNN…LIHT), 184-223 (EPGG…LLQH), 226-265 (VHSA…LLYT), and 268-307 (GHQG…VDYS). The disordered stretch occupies residues 311–340 (QQKRDHRTPSAQASGAAGDPESRSGQKTEV). The stretch at 380–412 (QLDVLTQTVAILEQRLTLTEDKLKECLEQQHQA) forms a coiled coil.

It belongs to the WD repeat POC1 family.

In terms of biological role, may play an important role in centriole assembly and/or stability and ciliogenesis. This chain is POC1 centriolar protein homolog A, found in Danio rerio (Zebrafish).